Consider the following 253-residue polypeptide: Acetylglutamate kinase (253 aa).

Substrate is bound by residues 37 to 38 (GG), R59, and N149.

It belongs to the acetylglutamate kinase family. ArgB subfamily.

Its subcellular location is the cytoplasm. It catalyses the reaction N-acetyl-L-glutamate + ATP = N-acetyl-L-glutamyl 5-phosphate + ADP. It participates in amino-acid biosynthesis; L-arginine biosynthesis; N(2)-acetyl-L-ornithine from L-glutamate: step 2/4. In terms of biological role, catalyzes the ATP-dependent phosphorylation of N-acetyl-L-glutamate. The protein is Acetylglutamate kinase of Rubrobacter xylanophilus (strain DSM 9941 / JCM 11954 / NBRC 16129 / PRD-1).